A 650-amino-acid chain; its full sequence is ATP-dependent DNA helicase PIF1 (650 aa).

The segment at 14–192 is PINT; it reads MPSSTEAATD…ALEKRPMESQ (179 aa). Phosphoserine is present on residues S40 and S164. Residues 171-199 are disordered; that stretch reads LQRAAATKAPDSALEKRPMESQTSTEAPR. 237-244 contacts ATP; the sequence is GSAGTGKS. The DNA-binding element occupies 586-605; sequence QAYVALSRARSLQGLRVLDF. The interval 631–650 is disordered; that stretch reads LESQDDEEANSDLENMDPNL. The span at 633–650 shows a compositional bias: acidic residues; that stretch reads SQDDEEANSDLENMDPNL.

Belongs to the helicase family. PIF1 subfamily. Monomer. Interacts with telomerase. Mg(2+) serves as cofactor.

It is found in the nucleus. It localises to the mitochondrion. The enzyme catalyses Couples ATP hydrolysis with the unwinding of duplex DNA at the replication fork by translocating in the 5'-3' direction. This creates two antiparallel DNA single strands (ssDNA). The leading ssDNA polymer is the template for DNA polymerase III holoenzyme which synthesizes a continuous strand.. It carries out the reaction ATP + H2O = ADP + phosphate + H(+). Functionally, DNA-dependent ATPase and 5'-3' DNA helicase required for the maintenance of both mitochondrial and nuclear genome stability. Efficiently unwinds G-quadruplex (G4) DNA structures and forked RNA-DNA hybrids. Resolves G4 structures, preventing replication pausing and double-strand breaks (DSBs) at G4 motifs. Involved in the maintenance of telomeric DNA. Inhibits telomere elongation, de novo telomere formation and telomere addition to DSBs via catalytic inhibition of telomerase. Reduces the processivity of telomerase by displacing active telomerase from DNA ends. Releases telomerase by unwinding the short telomerase RNA/telomeric DNA hybrid that is the intermediate in the telomerase reaction. Possesses an intrinsic strand annealing activity. This is ATP-dependent DNA helicase PIF1 from Mus musculus (Mouse).